Reading from the N-terminus, the 618-residue chain is Citrolysin protein 1 (618 aa).

Bacterial hemolysins are exotoxins that attack blood cell membranes and cause cell rupture by mechanisms not clearly defined. The polypeptide is Citrolysin protein 1 (Citrobacter freundii).